The primary structure comprises 545 residues: Probable protein kinase UbiB (545 aa).

Positions 123–501 (DFEPIALASA…QIKQRQSQYL (379 aa)) constitute a Protein kinase domain. ATP is bound by residues 129-137 (LASASIAQV) and Lys-152. Asp-287 (proton acceptor) is an active-site residue. Residues 508-528 (LFLCGSLFLLSGLANIPWLFI) form a helical membrane-spanning segment.

The protein belongs to the ABC1 family. UbiB subfamily.

It is found in the cell inner membrane. It participates in cofactor biosynthesis; ubiquinone biosynthesis [regulation]. In terms of biological role, is probably a protein kinase regulator of UbiI activity which is involved in aerobic coenzyme Q (ubiquinone) biosynthesis. In Photorhabdus laumondii subsp. laumondii (strain DSM 15139 / CIP 105565 / TT01) (Photorhabdus luminescens subsp. laumondii), this protein is Probable protein kinase UbiB.